Reading from the N-terminus, the 63-residue chain is Large ribosomal subunit protein uL29 (63 aa).

This sequence belongs to the universal ribosomal protein uL29 family.

The chain is Large ribosomal subunit protein uL29 from Serratia proteamaculans (strain 568).